Consider the following 353-residue polypeptide: ATP-dependent (S)-NAD(P)H-hydrate dehydratase (353 aa).

Residues 18 to 345 (MLARVRQMVP…DEVHTAFLNL (328 aa)) enclose the YjeF C-terminal domain. Positions 95–121 (RSSPPALSSSDSGSSPSRTKSAPDTDP) are disordered. A compositionally biased stretch (low complexity) spans 96 to 114 (SSPPALSSSDSGSSPSRTK). Residues G143 and 196–202 (NVVEFGR) contribute to the (6S)-NADPHX site. ATP is bound by residues 241–245 (KGAKD) and 260–269 (GGLKRSGGQG). D270 contacts (6S)-NADPHX.

Belongs to the NnrD/CARKD family. It depends on Mg(2+) as a cofactor.

It is found in the cytoplasm. The catalysed reaction is (6S)-NADHX + ATP = ADP + phosphate + NADH + H(+). It catalyses the reaction (6S)-NADPHX + ATP = ADP + phosphate + NADPH + H(+). Catalyzes the dehydration of the S-form of NAD(P)HX at the expense of ATP, which is converted to ADP. Together with NAD(P)HX epimerase, which catalyzes the epimerization of the S- and R-forms, the enzyme allows the repair of both epimers of NAD(P)HX, a damaged form of NAD(P)H that is a result of enzymatic or heat-dependent hydration. This is ATP-dependent (S)-NAD(P)H-hydrate dehydratase from Neurospora crassa (strain ATCC 24698 / 74-OR23-1A / CBS 708.71 / DSM 1257 / FGSC 987).